Reading from the N-terminus, the 584-residue chain is Adenine deaminase (584 aa).

It belongs to the metallo-dependent hydrolases superfamily. Adenine deaminase family. The cofactor is Mn(2+).

It carries out the reaction adenine + H2O + H(+) = hypoxanthine + NH4(+). In Methanococcoides burtonii (strain DSM 6242 / NBRC 107633 / OCM 468 / ACE-M), this protein is Adenine deaminase.